The primary structure comprises 245 residues: Dof zinc finger protein DOF3.2 (245 aa).

Polar residues predominate over residues 15–26 (SCSTQDYQNQKK). The segment at 15–41 (SCSTQDYQNQKKPLSATRPAPPEQSLR) is disordered. The segment at 40–94 (LRCPRCDSTNTKFCYYNNYSLSQPRYFCKSCRRYWTKGGILRNIPIGGAYRKHKR) adopts a Dof-type zinc-finger fold. Zn(2+)-binding residues include C42, C45, C67, and C70. Positions 91 to 118 (KHKRSSSATKSLRTTPEPTMTHDGKSFP) are disordered. Residues 96-108 (SSATKSLRTTPEP) are compositionally biased toward polar residues.

In terms of assembly, interacts with TCP14. The PEAR proteins (e.g. DOF2.4, DOF5.1, DOF3.2, DOF1.1, DOF5.6 and DOF5.3) form a short-range concentration gradient that peaks at protophloem sieve elements (PSE).

It localises to the nucleus. Transcription factor that negatively affects seed germination and opposes TCP14 function in the regulation of a specific set of abscisic acid-related genes. The PEAR proteins (e.g. DOF2.4, DOF5.1, DOF3.2, DOF1.1, DOF5.6 and DOF5.3) activate gene expression that promotes radial growth of protophloem sieve elements. This is Dof zinc finger protein DOF3.2 from Arabidopsis thaliana (Mouse-ear cress).